The sequence spans 701 residues: Polyribonucleotide nucleotidyltransferase (701 aa).

Mg(2+) contacts are provided by Asp-487 and Asp-493. Positions 554–613 (PTMIAMKIDTDKIRDVIGKGGATIRAICEETKASIDIEDDGSIKIFGETKEAAEAARQRV) constitute a KH domain. One can recognise an S1 motif domain in the interval 623–691 (GKIYVGKVER…NRGRIKLSIK (69 aa)).

It belongs to the polyribonucleotide nucleotidyltransferase family. Component of the RNA degradosome, which is a multiprotein complex involved in RNA processing and mRNA degradation. Mg(2+) is required as a cofactor.

It is found in the cytoplasm. It carries out the reaction RNA(n+1) + phosphate = RNA(n) + a ribonucleoside 5'-diphosphate. Functionally, involved in mRNA degradation. Catalyzes the phosphorolysis of single-stranded polyribonucleotides processively in the 3'- to 5'-direction. In Pseudomonas putida (strain W619), this protein is Polyribonucleotide nucleotidyltransferase.